A 384-amino-acid chain; its full sequence is UDP-N-acetylglucosamine--N-acetylmuramyl-(pentapeptide) pyrophosphoryl-undecaprenol N-acetylglucosamine transferase (384 aa).

Residues 22-24, Arg-179, Ser-209, and Gln-312 contribute to the UDP-N-acetyl-alpha-D-glucosamine site; that span reads TGG.

It belongs to the glycosyltransferase 28 family. MurG subfamily.

Its subcellular location is the cell inner membrane. It catalyses the reaction di-trans,octa-cis-undecaprenyl diphospho-N-acetyl-alpha-D-muramoyl-L-alanyl-D-glutamyl-meso-2,6-diaminopimeloyl-D-alanyl-D-alanine + UDP-N-acetyl-alpha-D-glucosamine = di-trans,octa-cis-undecaprenyl diphospho-[N-acetyl-alpha-D-glucosaminyl-(1-&gt;4)]-N-acetyl-alpha-D-muramoyl-L-alanyl-D-glutamyl-meso-2,6-diaminopimeloyl-D-alanyl-D-alanine + UDP + H(+). The protein operates within cell wall biogenesis; peptidoglycan biosynthesis. In terms of biological role, cell wall formation. Catalyzes the transfer of a GlcNAc subunit on undecaprenyl-pyrophosphoryl-MurNAc-pentapeptide (lipid intermediate I) to form undecaprenyl-pyrophosphoryl-MurNAc-(pentapeptide)GlcNAc (lipid intermediate II). The protein is UDP-N-acetylglucosamine--N-acetylmuramyl-(pentapeptide) pyrophosphoryl-undecaprenol N-acetylglucosamine transferase of Treponema pallidum (strain Nichols).